Consider the following 292-residue polypeptide: Pyruvate formate-lyase 2-activating enzyme (292 aa).

In terms of domain architecture, Radical SAM core spans 33–287 (NDGEGIRTVV…REMAERAGLQ (255 aa)). [4Fe-4S] cluster contacts are provided by cysteine 47, cysteine 51, and cysteine 54. Residue 53–55 (WCA) coordinates S-adenosyl-L-methionine. The 4Fe-4S ferredoxin-type domain occupies 62–96 (GKIQTVRREAKCLHCAKCLRDADECPSGAFERIGR). S-adenosyl-L-methionine is bound by residues glycine 126, 175-177 (DLK), and histidine 247.

Belongs to the organic radical-activating enzymes family. The cofactor is [4Fe-4S] cluster.

Its subcellular location is the cytoplasm. It carries out the reaction glycyl-[formate C-acetyltransferase] + reduced [flavodoxin] + S-adenosyl-L-methionine = glycin-2-yl radical-[formate C-acetyltransferase] + semiquinone [flavodoxin] + 5'-deoxyadenosine + L-methionine + H(+). Functionally, activation of pyruvate formate-lyase 2 under anaerobic conditions by generation of an organic free radical, using S-adenosylmethionine and reduced flavodoxin as cosubstrates to produce 5'-deoxy-adenosine. In Escherichia coli (strain K12), this protein is Pyruvate formate-lyase 2-activating enzyme (pflC).